Here is a 103-residue protein sequence, read N- to C-terminus: ATP-dependent Clp protease adapter protein ClpS (103 aa).

Belongs to the ClpS family. In terms of assembly, binds to the N-terminal domain of the chaperone ClpA.

In terms of biological role, involved in the modulation of the specificity of the ClpAP-mediated ATP-dependent protein degradation. This is ATP-dependent Clp protease adapter protein ClpS from Nitrosomonas eutropha (strain DSM 101675 / C91 / Nm57).